Here is a 293-residue protein sequence, read N- to C-terminus: uncharacterized protein (293 aa).

Residues 55–77 form a helical membrane-spanning segment; it reads IVLAKEIFAVAFFSLGMSCLLMA.

Its subcellular location is the membrane. This is an uncharacterized protein from Caenorhabditis elegans.